The sequence spans 261 residues: Glucosamine-6-phosphate deaminase (261 aa).

Aspartate 67 serves as the catalytic Proton acceptor; for enolization step. Aspartate 136 serves as the catalytic For ring-opening step. Catalysis depends on histidine 138, which acts as the Proton acceptor; for ring-opening step. Glutamate 143 (for ring-opening step) is an active-site residue.

This sequence belongs to the glucosamine/galactosamine-6-phosphate isomerase family. NagB subfamily.

The catalysed reaction is alpha-D-glucosamine 6-phosphate + H2O = beta-D-fructose 6-phosphate + NH4(+). It functions in the pathway amino-sugar metabolism; N-acetylneuraminate degradation; D-fructose 6-phosphate from N-acetylneuraminate: step 5/5. In terms of biological role, catalyzes the reversible isomerization-deamination of glucosamine 6-phosphate (GlcN6P) to form fructose 6-phosphate (Fru6P) and ammonium ion. This chain is Glucosamine-6-phosphate deaminase, found in Mycolicibacterium smegmatis (strain ATCC 700084 / mc(2)155) (Mycobacterium smegmatis).